We begin with the raw amino-acid sequence, 624 residues long: Chaperone protein HtpG (624 aa).

The segment at 1-336 (MKGQETRGFQ…SSDLSLNVSR (336 aa)) is a; substrate-binding. The tract at residues 337 to 552 (EILQDSTVTR…ADEMSTQMAK (216 aa)) is b. A c region spans residues 553–624 (LFAAAGQKVP…IRRMNQLLVS (72 aa)).

The protein belongs to the heat shock protein 90 family. Homodimer.

The protein localises to the cytoplasm. In terms of biological role, molecular chaperone. Has ATPase activity. The protein is Chaperone protein HtpG of Shigella dysenteriae serotype 1 (strain Sd197).